Here is a 115-residue protein sequence, read N- to C-terminus: Nucleoid-associated protein tlr0723 (115 aa).

Belongs to the YbaB/EbfC family. As to quaternary structure, homodimer.

It localises to the cytoplasm. The protein localises to the nucleoid. In terms of biological role, binds to DNA and alters its conformation. May be involved in regulation of gene expression, nucleoid organization and DNA protection. This chain is Nucleoid-associated protein tlr0723, found in Thermosynechococcus vestitus (strain NIES-2133 / IAM M-273 / BP-1).